The chain runs to 271 residues: Phospholipid scramblase family member 5 (271 aa).

Polar residues predominate over residues 1 to 10 (MASKDAQNQR). Positions 1 to 33 (MASKDAQNQRRGLPGFLPGAPDPDQSLPASSNP) are disordered. The interval 1–45 (MASKDAQNQRRGLPGFLPGAPDPDQSLPASSNPGNQAWQLSLPLP) is proline-rich domain (PRD).

It belongs to the phospholipid scramblase family.

This Homo sapiens (Human) protein is Phospholipid scramblase family member 5 (PLSCR5).